Here is a 361-residue protein sequence, read N- to C-terminus: Ankyrin repeat domain-containing protein 16 (361 aa).

9 ANK repeats span residues 36–66, 70–99, 103–132, 136–165, 170–200, 204–234, 238–268, 273–302, and 306–335; these read AGDT…DIEA, DYKR…AVDC, ADWT…NPLL, DGWN…GAWK, IRRT…EPDY, CGVT…CLSA, LGAQ…DVDV, THLT…DINS, and KNRS…KDSE.

In terms of assembly, interacts with AARS; the interaction is direct.

It is found in the cytoplasm. The protein localises to the nucleus. Required to prevent the misactivation of serine (Ser) with tRNA(Ala) by promoting the hydrolysis of Ser-mischarged tRNA(Ala), thereby playing a role in translational fidelity. Binds directly to the catalytic domain of AARS/AlaRS and captures Ser that is misactivated by AARS/AlaRS, preventing the charging of Ser adenylates to tRNA(Ala) and precluding Ser misincorporation in nascent peptides. This chain is Ankyrin repeat domain-containing protein 16, found in Homo sapiens (Human).